Here is a 242-residue protein sequence, read N- to C-terminus: MSANGRSILLVDDDQEIRELLETYLSRAGFQVRSVSRGADFRQALCEEEASLAILDVMLPDEDGFSLCRWIRSHQRLACMPIIMLTASSDEADRVIGLELGADDYLGKPFSPRELLARIKALLRRAQFTQVRGGDVLAFEDWRLDTVSHRLFHEDGEEFFLSGADFALLKLFLDHPQQILDRDTIANATRGREVLPLERIVDMAVSRLRQRLRDTGKAPRLIQTVRGSGYLLAAQVRPHLQP.

One can recognise a Response regulatory domain in the interval 7 to 123 (SILLVDDDQE…ELLARIKALL (117 aa)). Position 56 is a 4-aspartylphosphate (Asp-56). Residues 134–234 (GDVLAFEDWR…VRGSGYLLAA (101 aa)) constitute a DNA-binding region (ompR/PhoB-type).

Post-translationally, phosphorylated by GtrS.

It localises to the cytoplasm. Its activity is regulated as follows. Phosphorylation of GltR induces its dissociation from DNA leading to transcriptional activation. Functionally, member of the two-component regulatory system GtrS/GltR involved in the regulation of glucose metabolism and transport, as well as regulation of the exotoxin A gene expression. GltR controls the transcription of genes involved in glucose metabolism (glk and edd/gap-1) and transport (oprB) as well as the expression of toxA that encodes exotoxin A, the primary virulence factor. Acts as a repressor that is released from its target operators upon phosphorylation. Its function is as follows. Contributes to modulation of the type III secretion system (T3SS) in response to host cells via the regulation of the OprB transport system. The polypeptide is Transcriptional regulatory protein GltR (Pseudomonas aeruginosa (strain ATCC 15692 / DSM 22644 / CIP 104116 / JCM 14847 / LMG 12228 / 1C / PRS 101 / PAO1)).